The primary structure comprises 701 residues: Triadin (701 aa).

The disordered stretch occupies residues M1 to P28. Residues M1 to P47 lie on the Cytoplasmic side of the membrane. Residues G8 to V24 are compositionally biased toward polar residues. A helical membrane pass occupies residues A48–F68. The Lumenal segment spans residues D69 to Q701. The N-linked (GlcNAc...) asparagine glycan is linked to N75. Over residues D117–D130 the composition is skewed to acidic residues. Disordered stretches follow at residues D117–Q256, G273–Q654, and F676–Q701. 6 stretches are compositionally biased toward basic and acidic residues: residues K131–Q256, E303–E351, A365–P385, E391–T426, G437–P485, and V492–E643. N617 is a glycosylation site (N-linked (GlcNAc...) asparagine). A compositionally biased stretch (low complexity) spans P684–Q701.

As to quaternary structure, homooligomer of variable subunit number; disulfide-linked. Interacts with CASQ1 and RYR1 in skeletal muscle. Interacts with CASQ2. In terms of processing, phosphorylated by CaMK2. Post-translationally, N-glycosylated. In terms of tissue distribution, detected in heart (at protein level). Skeletal and cardiac muscle.

It is found in the sarcoplasmic reticulum membrane. Functionally, contributes to the regulation of lumenal Ca2+ release via the sarcoplasmic reticulum calcium release channels RYR1 and RYR2, a key step in triggering skeletal and heart muscle contraction. Required for normal organization of the triad junction, where T-tubules and the sarcoplasmic reticulum terminal cisternae are in close contact. Required for normal skeletal muscle strength. Plays a role in excitation-contraction coupling in the heart and in regulating the rate of heart beats. This chain is Triadin (TRDN), found in Canis lupus familiaris (Dog).